The sequence spans 339 residues: Phenylalanine--tRNA ligase alpha subunit (339 aa).

Glutamate 247 contributes to the Mg(2+) binding site.

The protein belongs to the class-II aminoacyl-tRNA synthetase family. Phe-tRNA synthetase alpha subunit type 1 subfamily. In terms of assembly, tetramer of two alpha and two beta subunits. Requires Mg(2+) as cofactor.

It localises to the cytoplasm. It catalyses the reaction tRNA(Phe) + L-phenylalanine + ATP = L-phenylalanyl-tRNA(Phe) + AMP + diphosphate + H(+). This is Phenylalanine--tRNA ligase alpha subunit (pheS) from Deinococcus radiodurans (strain ATCC 13939 / DSM 20539 / JCM 16871 / CCUG 27074 / LMG 4051 / NBRC 15346 / NCIMB 9279 / VKM B-1422 / R1).